Consider the following 151-residue polypeptide: HTH-type transcriptional regulator FL11 (151 aa).

Positions 5-66 (LDDIDKKIIE…VVNPEALGYN (62 aa)) constitute an HTH asnC-type domain. A DNA-binding region (H-T-H motif) is located at residues 24-43 (LREISKITGLAESTIHERIK). 98 to 104 (ETTGDYD) lines the L-arginine pocket. Residues Asn118, Asp122, and 133–135 (THT) contribute to the L-lysine site. L-arginine-binding positions include Asp122 and 133-135 (THT).

In terms of assembly, homodimer. Binds DNA as a dimer and an octamer.

Its activity is regulated as follows. In the famine mode, FL11 forms dimers and acts as a repressor, leading to growth arrest. In the feast mode, in the presence of high concentrations of lysine or arginine, four dimers assemble into an octamer and cover the fl11 and lysine biosynthesis promoters. This leads to the inhibition of fl11 expression and lysine biosynthesis, decrease of the FL11 concentration in the cell, derepression of the target genes and activation of the metabolism. DNA-binding protein involved in the repression of transcription of a large number of genes, thereby arresting growth, in response to environmental changes. In Pyrococcus furiosus (strain ATCC 43587 / DSM 3638 / JCM 8422 / Vc1), this protein is HTH-type transcriptional regulator FL11.